The sequence spans 473 residues: Zinc finger and SCAN domain-containing protein 21 (473 aa).

A Glycyl lysine isopeptide (Lys-Gly) (interchain with G-Cter in SUMO2) cross-link involves residue Lys-27. The SCAN box domain maps to 45 to 127; that stretch reads RQRFRQFGYH…TLLEDLEREL (83 aa). Positions 127-171 are disordered; it reads LDEPGHQVSTPPNEQKPVWEKISSSGTAKESPSSMQPQPLETSHN. Residues 148–171 show a composition bias toward polar residues; the sequence is ISSSGTAKESPSSMQPQPLETSHN. Glycyl lysine isopeptide (Lys-Gly) (interchain with G-Cter in SUMO2) cross-links involve residues Lys-221 and Lys-232. Positions 244-272 are disordered; it reads LENEKGTKPPLQEAGSKKGRESVPTKPTP. The span at 258-272 shows a compositional bias: basic and acidic residues; the sequence is GSKKGRESVPTKPTP. C2H2-type zinc fingers lie at residues 277–299, 305–327, 333–354, 360–382, 388–410, 416–438, and 444–466; these read YICAECGKAFSNSSNLTKHRRTH, YVCTKCGKAFSHSSNLTLHYRTH, YDCKCGKAFGQSSDLLKHQRMH, YQCKDCGKAFSGKGSLIRHYRIH, YQCNECGKSFSQHAGLSSHQRLH, YKCKECGKAFNHSSNFNKHHRIH, and YWCHHCGKTFCSKSNLSKHQRVH. Lys-349 is covalently cross-linked (Glycyl lysine isopeptide (Lys-Gly) (interchain with G-Cter in SUMO2)).

The protein belongs to the krueppel C2H2-type zinc-finger protein family.

It is found in the nucleus. Its function is as follows. Strong transcriptional activator. Plays an important role in spermatogenesis; essential for the progression of meiotic prophase I in spermatocytes. The chain is Zinc finger and SCAN domain-containing protein 21 (ZSCAN21) from Gorilla gorilla gorilla (Western lowland gorilla).